A 396-amino-acid polypeptide reads, in one-letter code: NADH-quinone oxidoreductase subunit D 1 (396 aa).

This sequence belongs to the complex I 49 kDa subunit family. In terms of assembly, NDH-1 is composed of 14 different subunits. Subunits NuoB, C, D, E, F, and G constitute the peripheral sector of the complex.

The protein resides in the cell inner membrane. It catalyses the reaction a quinone + NADH + 5 H(+)(in) = a quinol + NAD(+) + 4 H(+)(out). Its function is as follows. NDH-1 shuttles electrons from NADH, via FMN and iron-sulfur (Fe-S) centers, to quinones in the respiratory chain. The immediate electron acceptor for the enzyme in this species is believed to be ubiquinone. Couples the redox reaction to proton translocation (for every two electrons transferred, four hydrogen ions are translocated across the cytoplasmic membrane), and thus conserves the redox energy in a proton gradient. This chain is NADH-quinone oxidoreductase subunit D 1, found in Rhizobium etli (strain ATCC 51251 / DSM 11541 / JCM 21823 / NBRC 15573 / CFN 42).